Here is a 249-residue protein sequence, read N- to C-terminus: Eukaryotic translation initiation factor 3 subunit K (249 aa).

The PCI domain occupies 46–222; it reads FDCYANLALL…VKVPTNKENE (177 aa).

Belongs to the eIF-3 subunit K family. As to quaternary structure, component of the eukaryotic translation initiation factor 3 (eIF-3) complex.

It is found in the cytoplasm. Functionally, component of the eukaryotic translation initiation factor 3 (eIF-3) complex, which is involved in protein synthesis of a specialized repertoire of mRNAs and, together with other initiation factors, stimulates binding of mRNA and methionyl-tRNAi to the 40S ribosome. The eIF-3 complex specifically targets and initiates translation of a subset of mRNAs involved in cell proliferation. This Neosartorya fischeri (strain ATCC 1020 / DSM 3700 / CBS 544.65 / FGSC A1164 / JCM 1740 / NRRL 181 / WB 181) (Aspergillus fischerianus) protein is Eukaryotic translation initiation factor 3 subunit K.